A 239-amino-acid chain; its full sequence is Orotidine 5'-phosphate decarboxylase (239 aa).

Residues D11, K33, 60–69 (DLKCHDIPTT), T123, R185, Q194, G214, and R215 contribute to the substrate site. The Proton donor role is filled by K62.

Belongs to the OMP decarboxylase family. Type 1 subfamily. Homodimer.

It carries out the reaction orotidine 5'-phosphate + H(+) = UMP + CO2. It functions in the pathway pyrimidine metabolism; UMP biosynthesis via de novo pathway; UMP from orotate: step 2/2. Its function is as follows. Catalyzes the decarboxylation of orotidine 5'-monophosphate (OMP) to uridine 5'-monophosphate (UMP). In Bacillus licheniformis (strain ATCC 14580 / DSM 13 / JCM 2505 / CCUG 7422 / NBRC 12200 / NCIMB 9375 / NCTC 10341 / NRRL NRS-1264 / Gibson 46), this protein is Orotidine 5'-phosphate decarboxylase.